The following is a 434-amino-acid chain: Serine hydroxymethyltransferase 2 (434 aa).

(6S)-5,6,7,8-tetrahydrofolate is bound by residues Leu-136 and 140–142 (GHL). Lys-245 carries the post-translational modification N6-(pyridoxal phosphate)lysine.

Belongs to the SHMT family. In terms of assembly, homodimer. Requires pyridoxal 5'-phosphate as cofactor.

It is found in the cytoplasm. It catalyses the reaction (6R)-5,10-methylene-5,6,7,8-tetrahydrofolate + glycine + H2O = (6S)-5,6,7,8-tetrahydrofolate + L-serine. Its pathway is one-carbon metabolism; tetrahydrofolate interconversion. It participates in amino-acid biosynthesis; glycine biosynthesis; glycine from L-serine: step 1/1. Catalyzes the reversible interconversion of serine and glycine with tetrahydrofolate (THF) serving as the one-carbon carrier. This reaction serves as the major source of one-carbon groups required for the biosynthesis of purines, thymidylate, methionine, and other important biomolecules. Also exhibits THF-independent aldolase activity toward beta-hydroxyamino acids, producing glycine and aldehydes, via a retro-aldol mechanism. In Rhodopseudomonas palustris (strain ATCC BAA-98 / CGA009), this protein is Serine hydroxymethyltransferase 2.